The following is a 2057-amino-acid chain: Protein TIC 214 (2057 aa).

4 consecutive transmembrane segments (helical) span residues 13 to 33, 62 to 82, 158 to 178, and 206 to 226; these read KIINSVLAAGLYYGFLSAFSI, LIMGQILLFISIYYKPFHIAL, LFVTSSFFAWFIGQILVCEFF, and SDYFHFFFVILFFMMSLHSFG. Positions 248–340 form a coiled coil; it reads LILKGTDEEE…RVIQEKERKS (93 aa). Basic residues predominate over residues 288 to 302; it reads NHLKKKKDRQKKQGT. Disordered regions lie at residues 288–316, 614–807, 890–910, 1597–1634, and 1724–1817; these read NHLKKKKDRQKKQGTRGHSDKEFHSNSNT, ETHT…EEKG, DEQTKREEKPKRESKKKNDRV, EEEEINPEEEINPEEEINPEEEINPSSNQKTPIGTNND, and KKKN…KSLS. 2 stretches are compositionally biased toward basic and acidic residues: residues 621 to 657 and 665 to 702; these read ATDKETKPNASKETDTVNKETKPNASKETDTIDKETK and NTVDKETKTNASKETDTVDKETKPNASKETDTIDKETK. The span at 704–713 shows a compositional bias: polar residues; it reads NASKETNTVN. Basic and acidic residues-rich tracts occupy residues 714-807 and 891-900; these read KETK…EEKG and EQTKREEKPK. Positions 1597–1619 are enriched in acidic residues; that stretch reads EEEEINPEEEINPEEEINPEEEI. Polar residues predominate over residues 1622–1634; the sequence is SSNQKTPIGTNND. Basic and acidic residues predominate over residues 1753-1817; sequence TNSEKKSKTN…ETDSEKKSLS (65 aa).

The protein belongs to the TIC214 family. Part of the Tic complex.

It is found in the plastid. Its subcellular location is the chloroplast inner membrane. Involved in protein precursor import into chloroplasts. May be part of an intermediate translocation complex acting as a protein-conducting channel at the inner envelope. The polypeptide is Protein TIC 214 (Ipomoea purpurea (Common morning glory)).